The chain runs to 62 residues: Large ribosomal subunit protein bL28 (62 aa).

This sequence belongs to the bacterial ribosomal protein bL28 family.

This Carboxydothermus hydrogenoformans (strain ATCC BAA-161 / DSM 6008 / Z-2901) protein is Large ribosomal subunit protein bL28.